The following is a 445-amino-acid chain: Phosphoglucosamine mutase (445 aa).

The Phosphoserine intermediate role is filled by serine 105. Mg(2+)-binding residues include serine 105, aspartate 244, aspartate 246, and aspartate 248. Residue serine 105 is modified to Phosphoserine.

Belongs to the phosphohexose mutase family. Requires Mg(2+) as cofactor. Post-translationally, activated by phosphorylation.

It catalyses the reaction alpha-D-glucosamine 1-phosphate = D-glucosamine 6-phosphate. Functionally, catalyzes the conversion of glucosamine-6-phosphate to glucosamine-1-phosphate. This Janthinobacterium sp. (strain Marseille) (Minibacterium massiliensis) protein is Phosphoglucosamine mutase.